Consider the following 407-residue polypeptide: Protein NIS1 (407 aa).

The span at 41 to 61 (SNSNSNSNTNSNTNSNTNSNS) shows a compositional bias: low complexity. A disordered region spans residues 41-64 (SNSNSNSNTNSNTNSNTNSNSDTK). S260, S264, S300, and S302 each carry phosphoserine. Residues 277–302 (IKQNSTTPTTRSVYNKNVGRSNTSPS) are compositionally biased toward polar residues. The interval 277–315 (IKQNSTTPTTRSVYNKNVGRSNTSPSVLYHPKRRGKLNT) is disordered. The span at 306 to 315 (HPKRRGKLNT) shows a compositional bias: basic residues. Residues 391 to 398 (IIIPDSQD) carry the SUMO-binding motif.

In terms of assembly, interacts with CBF2, GIS1, NAP1, PRM8, REI1, SHS1 and SMT3.

It localises to the bud neck. The protein localises to the cytoplasm. It is found in the cell cortex. Functionally, may be involved in a mitotic signaling network. Binds sumoylated proteins and may stabilize SUMO chains. The chain is Protein NIS1 (NIS1) from Saccharomyces cerevisiae (strain ATCC 204508 / S288c) (Baker's yeast).